The following is a 221-amino-acid chain: uncharacterized protein (221 aa).

This is an uncharacterized protein from Shigella flexneri.